The primary structure comprises 362 residues: Peptide chain release factor 1 (362 aa).

Gln-236 is modified (N5-methylglutamine).

Belongs to the prokaryotic/mitochondrial release factor family. Methylated by PrmC. Methylation increases the termination efficiency of RF1.

The protein resides in the cytoplasm. In terms of biological role, peptide chain release factor 1 directs the termination of translation in response to the peptide chain termination codons UAG and UAA. This chain is Peptide chain release factor 1, found in Lactobacillus johnsonii (strain CNCM I-12250 / La1 / NCC 533).